We begin with the raw amino-acid sequence, 110 residues long: Parvalbumin alpha (110 aa).

Serine 2 is subject to N-acetylserine. Phosphoserine is present on residues serine 2 and serine 24. 2 consecutive EF-hand domains span residues 39–74 (KSPE…FSPD) and 78–110 (LSVK…VAES). Residues aspartate 52, aspartate 54, serine 56, phenylalanine 58, glutamate 60, glutamate 63, aspartate 91, aspartate 93, aspartate 95, lysine 97, and glutamate 102 each coordinate Ca(2+).

This sequence belongs to the parvalbumin family.

In terms of biological role, in muscle, parvalbumin is thought to be involved in relaxation after contraction. It binds two calcium ions. This Bos taurus (Bovine) protein is Parvalbumin alpha (PVALB).